A 945-amino-acid chain; its full sequence is MGAIGGDEVVQWDKMDGGEVVNGGGGGGVGKLERILVSVRLRPLSDKEIARGDPSEWECINDTTIISRSTFPDRPSAPTAYSFDRVFRSDCDTNEVYKQGAKEVALSVVSGINSSIFAYGQTSSGKTYTMTGITEYTVADIYDYIGKHEERAFVLKFSAIEIYNEVVRDLLSAENTPLRLWDDAEKGTYVENLTEVVLRDWNHLKELISVCEAQRKTGETYLNENSSRSHQILKLTIESSAREFLGKDKSTTLVASVNFVDLAGSERASQALSAGARLKEGCHINRSLLTLGTVIRKLSKVRNGHIPYRDSKLTRILQPSLGGNARTAIICTMSPARSHMEQSRNTLLFASCAKEVVTNAQVNVVMSDKALVKQLQKELARLESELRCPASYSSLESLVKEKDNQIRKMEKEIKELKLQRDLAQSRLQDLLQVVGDNHVHVSKQSSVSGRNFTFDVPQTCEDEQSTTESSEVVDSVQNFRFQGRRVAQREHKPQQAENNVQFTTPSRYSVSSPPFSGMLPTNRSDHLSQISNEDSDDICKEVRCIETNETGGNECLESSAVGSNSLQDPNAGSSMHINNDSNSSMNSRLRDESPVTLEQHLENVRKPFANIVKDLGSSTRNSSSSKVLGRSRSCRSLTGSSLFEDLEKDDCTPPNRSFIDFAGRPQNCQRRGSALNYDAESETLSRAGSMLSEITTTRDGLKANSSVAGDTEFTGIGEFVAELKEMAQVQYQKQLGHSGNGDLAEGTIRSVGLDPITDALQSPSRWPLEFEKKQQEIIDFWHACNVSLVHRTYFFLLFKGDPADSIYMEVELRRLSFLKDTYSNGAIASIPNTSLVSSAKKLQREREMLCRQMQRRLSIEERESMYTKWGVSLASKRRRLQVARCLWTETKDLEHVRESASLVARLIGLLEPGKALREMFGLSFAPQQFTRRSYNSWRYGRSSLN.

Residues 34-356 (RILVSVRLRP…LLFASCAKEV (323 aa)) form the Kinesin motor domain. 120-127 (GQTSSGKT) provides a ligand contact to ATP. The stretch at 365–437 (VMSDKALVKQ…QDLLQVVGDN (73 aa)) forms a coiled coil. Disordered regions lie at residues 484–512 (RRVA…SVSS) and 553–588 (NECL…MNSR). Composition is skewed to polar residues over residues 495–512 (QAEN…SVSS) and 560–587 (AVGS…SMNS).

The protein belongs to the TRAFAC class myosin-kinesin ATPase superfamily. Kinesin family. KIN-7 subfamily. In terms of assembly, binds microtubules.

Binds ATP/ADP in vitro. Possesses low ATPase activity but high affinity for microtubules. This is Kinesin-like protein KIN-7F from Oryza sativa subsp. japonica (Rice).